A 332-amino-acid polypeptide reads, in one-letter code: MSDEKIINQPQDVVSEMLDGLTYAYGDLIEKVPDFEIIQRKSPKSGKVALVSGGGSGHKPAHAGFVGEGMLSAAVCGAIFTSPTPDQIYEAIKSADEGAGVLLIIKNYLGDVMNFEMAREMAEMEEIKVEQIIVDDDIAVENSLYTQGRRGVAGTVLVHKILGAAAHQEASLDEIKDLADKVVKNIKTIGLALSAATVPEVGKPGFVLDDNEIEYGVGIHSEPGYRREKMKTSYELATELVGKLKEEFKFEAGQKYGILVNGMGATPLMEQFIFMNDVAKLLTEENIEILFKKVGNYMTSIDMAGLSLTMIKLEDDQWLKNLNEDVKTISWG.

The DhaK domain occupies 9-331 (QPQDVVSEML…LNEDVKTISW (323 aa)). Residues 55–58 (GSGH), K106, and D111 each bind dihydroxyacetone. Catalysis depends on H58, which acts as the Proton acceptor. The Tele-hemiaminal-histidine intermediate role is filled by H220.

In terms of assembly, homodimer. The dihydroxyacetone kinase complex is composed of a homodimer of DhaM, a homodimer of DhaK and the subunit DhaL.

The enzyme catalyses dihydroxyacetone + phosphoenolpyruvate = dihydroxyacetone phosphate + pyruvate. Its pathway is polyol metabolism; glycerol degradation. In terms of biological role, dihydroxyacetone binding subunit of the dihydroxyacetone kinase, which is responsible the phosphoenolpyruvate (PEP)-dependent phosphorylation of dihydroxyacetone via a phosphoryl group transfer from DhaL-ATP. The sequence is that of PTS-dependent dihydroxyacetone kinase, dihydroxyacetone-binding subunit DhaK from Lactococcus lactis subsp. lactis (strain IL1403) (Streptococcus lactis).